The primary structure comprises 144 residues: EF-hand calcium-binding domain-containing protein 8 (144 aa).

2 EF-hand domains span residues 52 to 86 and 87 to 122; these read IHLA…VLSS and VSDE…EFQG.

In Homo sapiens (Human), this protein is EF-hand calcium-binding domain-containing protein 8 (EFCAB8).